We begin with the raw amino-acid sequence, 182 residues long: Peptide deformylase (182 aa).

Positions 100 and 142 each coordinate Fe cation. Residue Glu143 is part of the active site. His146 lines the Fe cation pocket.

Belongs to the polypeptide deformylase family. Requires Fe(2+) as cofactor.

It carries out the reaction N-terminal N-formyl-L-methionyl-[peptide] + H2O = N-terminal L-methionyl-[peptide] + formate. In terms of biological role, removes the formyl group from the N-terminal Met of newly synthesized proteins. Requires at least a dipeptide for an efficient rate of reaction. N-terminal L-methionine is a prerequisite for activity but the enzyme has broad specificity at other positions. This Bartonella bacilliformis (strain ATCC 35685 / KC583 / Herrer 020/F12,63) protein is Peptide deformylase.